The sequence spans 212 residues: Ribosomal RNA small subunit methyltransferase G (212 aa).

S-adenosyl-L-methionine-binding positions include Gly-72, Leu-77, 123 to 124 (VE), and Arg-138.

This sequence belongs to the methyltransferase superfamily. RNA methyltransferase RsmG family.

The protein resides in the cytoplasm. It catalyses the reaction guanosine(527) in 16S rRNA + S-adenosyl-L-methionine = N(7)-methylguanosine(527) in 16S rRNA + S-adenosyl-L-homocysteine. Its function is as follows. Specifically methylates the N7 position of guanine in position 527 of 16S rRNA. This chain is Ribosomal RNA small subunit methyltransferase G, found in Histophilus somni (strain 2336) (Haemophilus somnus).